A 426-amino-acid polypeptide reads, in one-letter code: Glutamate-1-semialdehyde 2,1-aminomutase (426 aa).

At Lys265 the chain carries N6-(pyridoxal phosphate)lysine.

It belongs to the class-III pyridoxal-phosphate-dependent aminotransferase family. HemL subfamily. Homodimer. Requires pyridoxal 5'-phosphate as cofactor.

It localises to the cytoplasm. It catalyses the reaction (S)-4-amino-5-oxopentanoate = 5-aminolevulinate. Its pathway is porphyrin-containing compound metabolism; protoporphyrin-IX biosynthesis; 5-aminolevulinate from L-glutamyl-tRNA(Glu): step 2/2. This Alcanivorax borkumensis (strain ATCC 700651 / DSM 11573 / NCIMB 13689 / SK2) protein is Glutamate-1-semialdehyde 2,1-aminomutase.